Here is a 173-residue protein sequence, read N- to C-terminus: NADH-ubiquinone oxidoreductase chain 6 (173 aa).

Helical transmembrane passes span 1–21, 27–47, 48–68, 91–111, and 141–161; these read MTYFVFFLSLCFVLGGLAVAS, YGVVGLVLASVAGCGWLLSLG, VSFVSLVLFMVYLGGMLVVFV, GVGFVGVLVMGLVVGGFIGCL, and VGMFLVAGWGLLLTLFVVLEL.

The protein belongs to the complex I subunit 6 family.

The protein localises to the mitochondrion membrane. It carries out the reaction a ubiquinone + NADH + 5 H(+)(in) = a ubiquinol + NAD(+) + 4 H(+)(out). In terms of biological role, core subunit of the mitochondrial membrane respiratory chain NADH dehydrogenase (Complex I) that is believed to belong to the minimal assembly required for catalysis. Complex I functions in the transfer of electrons from NADH to the respiratory chain. The immediate electron acceptor for the enzyme is believed to be ubiquinone. The polypeptide is NADH-ubiquinone oxidoreductase chain 6 (MT-ND6) (Fratercula arctica (Atlantic puffin)).